Reading from the N-terminus, the 260-residue chain is Circadian clock-controlled protein daywake (260 aa).

The first 25 residues, 1 to 25 (MQLTSASVCLLWMGLLSWVSHRIDA), serve as a signal peptide directing secretion.

The protein belongs to the TO family.

Component of the circadian clock or downstream effector of clock function. Required for suppressing daytime sleep (siesta) under ambient environmental temperatures. Part of a heat avoidance mechanism that modulates daytime sleep behavior under different environmental temperatures to minimize the risk of heat exposure. Under cooler ambient temperatures, suppresses daytime sleep (siesta) and thus allows for longer periods of daytime activity. The sequence is that of Circadian clock-controlled protein daywake from Drosophila yakuba (Fruit fly).